The chain runs to 231 residues: Pathogenesis-related thaumatin-like protein 3.7 (231 aa).

The signal sequence occupies residues 1–27 (MATVSDLALLLVAGLVAISLHMQEAGA). 8 disulfides stabilise this stretch: Cys-36–Cys-230, Cys-77–Cys-87, Cys-92–Cys-98, Cys-143–Cys-218, Cys-148–Cys-201, Cys-156–Cys-166, Cys-170–Cys-179, and Cys-180–Cys-188.

This sequence belongs to the thaumatin family.

Functionally, may be involved in disease resistance. This is Pathogenesis-related thaumatin-like protein 3.7 from Cryptomeria japonica (Japanese cedar).